The following is a 209-amino-acid chain: MIAIIDYGMGNIRSVEQALKYIGAAYIVTSDKEEIFRSDGVILPGVGAFPKAMDILEEKDLVRVLQEIGRSRKPLLGICLGMQLLFEKSEELQDCNGLSLLPGVIRKLKVPYKIPHMGWNELKKEGEIALWNGVEDGSFVYYVHSYYADCPNEIVYGISDYGVKVPGFVAKGNIYGAQFHPEKSGDIGMQILKNFKGVVETWKSSQLSI.

The Glutamine amidotransferase type-1 domain occupies M1–S205. The active-site Nucleophile is C79. Residues H180 and E182 contribute to the active site.

Heterodimer of HisH and HisF.

The protein resides in the cytoplasm. It catalyses the reaction 5-[(5-phospho-1-deoxy-D-ribulos-1-ylimino)methylamino]-1-(5-phospho-beta-D-ribosyl)imidazole-4-carboxamide + L-glutamine = D-erythro-1-(imidazol-4-yl)glycerol 3-phosphate + 5-amino-1-(5-phospho-beta-D-ribosyl)imidazole-4-carboxamide + L-glutamate + H(+). It carries out the reaction L-glutamine + H2O = L-glutamate + NH4(+). It functions in the pathway amino-acid biosynthesis; L-histidine biosynthesis; L-histidine from 5-phospho-alpha-D-ribose 1-diphosphate: step 5/9. IGPS catalyzes the conversion of PRFAR and glutamine to IGP, AICAR and glutamate. The HisH subunit catalyzes the hydrolysis of glutamine to glutamate and ammonia as part of the synthesis of IGP and AICAR. The resulting ammonia molecule is channeled to the active site of HisF. The protein is Imidazole glycerol phosphate synthase subunit HisH of Bacillus thuringiensis (strain Al Hakam).